The sequence spans 611 residues: Alpha-1,2-mannosyltransferase ALG9 (611 aa).

Basic residues predominate over residues 1-10 (MASRRARQRL). Residues 1–51 (MASRRARQRLKGGGGGGGGGGDAGPAAEKLEQLGSREAGAEPRPESGNKAG) form a disordered region. At 1 to 135 (MASRRARQRL…FHARILQTNK (135 aa)) the chain is on the lumenal side. The span at 11–23 (KGGGGGGGGGGDA) shows a compositional bias: gly residues. N-linked (GlcNAc...) asparagine glycosylation occurs at asparagine 77. A helical membrane pass occupies residues 136 to 156 (ILVFYFLRCLLAFVSCVCELY). At 157–171 (FYKAVCKKFGLHVSR) the chain is on the cytoplasmic side. A helical transmembrane segment spans residues 172-192 (MMLAFLVLSTGMFCSSSAFLP). Over 193-213 (SSFCMYTTLIAMTGWYMDKTP) the chain is Lumenal. The helical transmembrane segment at 214-234 (IAVLGVAAGAILGWPFSAALG) threads the bilayer. Residues 235 to 249 (LPIAFDLLARKHRWK) lie on the Cytoplasmic side of the membrane. Residues 250–270 (SFLLWSLVALALFLVPVVVID) form a helical membrane-spanning segment. Residues 271 to 310 (SYYYGKLVVAPLNIVLYNVFTSHGPDLYGTEPWYFYLING) are Lumenal-facing. Residues 311-331 (FLNFNVAFALALLVLPLTFLM) traverse the membrane as a helical segment. At 332–342 (EYLLQRFHVQN) the chain is on the cytoplasmic side. A helical membrane pass occupies residues 343–363 (LGHPYWLTLAPMYIWFIIFFI). Over 364–370 (QPHKEER) the chain is Lumenal. A helical transmembrane segment spans residues 371–391 (FLFPVYPLICLCGAVALSALQ). Residues 392 to 405 (KCYHFVFQRYRLEH) are Cytoplasmic-facing. Residues 406–426 (YTVTSNWLALGTVFLFGLLSF) traverse the membrane as a helical segment. Topologically, residues 427–611 (SRSVALFRGY…AKPSRKKSGG (185 aa)) are lumenal. Asparagine 550 and asparagine 593 each carry an N-linked (GlcNAc...) asparagine glycan.

It belongs to the glycosyltransferase 22 family.

The protein resides in the endoplasmic reticulum membrane. The catalysed reaction is an alpha-D-Man-(1-&gt;2)-alpha-D-Man-(1-&gt;2)-alpha-D-Man-(1-&gt;3)-[alpha-D-Man-(1-&gt;3)-alpha-D-Man-(1-&gt;6)]-beta-D-Man-(1-&gt;4)-beta-D-GlcNAc-(1-&gt;4)-alpha-D-GlcNAc-diphospho-di-trans,poly-cis-dolichol + a di-trans,poly-cis-dolichyl beta-D-mannosyl phosphate = an alpha-D-Man-(1-&gt;2)-alpha-D-Man-(1-&gt;2)-alpha-D-Man-(1-&gt;3)-[alpha-D-Man-(1-&gt;2)-alpha-D-Man-(1-&gt;3)-alpha-D-Man-(1-&gt;6)]-beta-D-Man-(1-&gt;4)-beta-D-GlcNAc-(1-&gt;4)-alpha-D-GlcNAc-diphospho-di-trans,poly-cis-dolichol + a di-trans,poly-cis-dolichyl phosphate + H(+). It carries out the reaction an alpha-D-Man-(1-&gt;2)-alpha-D-Man-(1-&gt;2)-alpha-D-Man-(1-&gt;3)-[alpha-D-Man-(1-&gt;2)-alpha-D-Man-(1-&gt;3)-[alpha-D-Man-(1-&gt;6)]-alpha-D-Man-(1-&gt;6)]-beta-D-Man-(1-&gt;4)-beta-D-GlcNAc-(1-&gt;4)-alpha-D-GlcNAc-diphospho-di-trans,poly-cis-dolichol + a di-trans,poly-cis-dolichyl beta-D-mannosyl phosphate = an alpha-D-Man-(1-&gt;2)-alpha-D-Man-(1-&gt;2)-alpha-D-Man-(1-&gt;3)-[alpha-D-Man-(1-&gt;2)-alpha-D-Man-(1-&gt;3)-[alpha-D-Man-(1-&gt;2)-alpha-D-Man-(1-&gt;6)]-alpha-D-Man-(1-&gt;6)]-beta-D-Man-(1-&gt;4)-beta-D-GlcNAc-(1-&gt;4)-alpha-D-GlcNAc-diphospho-di-trans,poly-cis-dolichol + a di-trans,poly-cis-dolichyl phosphate + H(+). Its pathway is protein modification; protein glycosylation. Its function is as follows. Mannosyltransferase that operates in the biosynthetic pathway of dolichol-linked oligosaccharides, the glycan precursors employed in protein asparagine (N)-glycosylation. The assembly of dolichol-linked oligosaccharides begins on the cytosolic side of the endoplasmic reticulum membrane and finishes in its lumen. The sequential addition of sugars to dolichol pyrophosphate produces dolichol-linked oligosaccharides containing fourteen sugars, including two GlcNAcs, nine mannoses and three glucoses. Once assembled, the oligosaccharide is transferred from the lipid to nascent proteins by oligosaccharyltransferases. In the lumen of the endoplasmic reticulum, catalyzes the addition of the seventh and ninth alpha-1,2-linked mannose residues to Man(6)GlcNAc(2)-PP-dolichol and Man(8)GlcNAc(2)-PP-dolichol respectively. This is Alpha-1,2-mannosyltransferase ALG9 from Mus musculus (Mouse).